An 88-amino-acid polypeptide reads, in one-letter code: Large ribosomal subunit protein bL31B (88 aa).

Belongs to the bacterial ribosomal protein bL31 family. Type B subfamily. In terms of assembly, part of the 50S ribosomal subunit.

This Bordetella pertussis (strain Tohama I / ATCC BAA-589 / NCTC 13251) protein is Large ribosomal subunit protein bL31B.